Reading from the N-terminus, the 487-residue chain is L-carnitine dehydrogenase/betainyl-CoA thioesterase (487 aa).

An L-carnitine dehydrogenase region spans residues 1–327 (MTTAAIIGGG…DAALKPKALP (327 aa)). 8–13 (GGGVIG) provides a ligand contact to NAD(+). The tract at residues 328 to 487 (DLDTADLTQP…GAGSAIRKPA (160 aa)) is betainyl-CoA thioesterase.

This sequence in the N-terminal section; belongs to the 3-hydroxyacyl-CoA dehydrogenase family. L-carnitine dehydrogenase subfamily. The protein in the C-terminal section; belongs to the betainyl-CoA thioesterase family. As to quaternary structure, homodimer.

Its subcellular location is the cytoplasm. The enzyme catalyses carnitine + NAD(+) = 3-dehydrocarnitine + NADH + H(+). It catalyses the reaction N,N,N-trimethylglycyl-CoA + H2O = glycine betaine + CoA + H(+). It participates in amine and polyamine metabolism; carnitine metabolism. In terms of biological role, multifunctional enzyme that catalyzes the NAD(+)-dependent oxidation of L-carnitine to 3-dehydrocarnitine and the cleavage of betainyl-CoA (N,N,N-trimethylglycyl-CoA) into glycine betaine and coenzyme A. This Ruegeria pomeroyi (strain ATCC 700808 / DSM 15171 / DSS-3) (Silicibacter pomeroyi) protein is L-carnitine dehydrogenase/betainyl-CoA thioesterase.